Here is a 393-residue protein sequence, read N- to C-terminus: Serpin-Z4 (393 aa).

The interval 342–366 is RCL; that stretch reads GTEAAAVSVASMTKDMLLMGDFVAD.

This sequence belongs to the serpin family.

Functionally, probable serine protease inhibitor. This chain is Serpin-Z4, found in Arabidopsis thaliana (Mouse-ear cress).